We begin with the raw amino-acid sequence, 461 residues long: SWM histone demethylase complex subunit phf1 (461 aa).

The interval Pro79–Glu130 is disordered. Polar residues predominate over residues Pro102 to Thr119. A PHD-type zinc finger spans residues Val190 to Arg246.

In terms of assembly, component of the SWM histone demethylase complex composed of at least lsd1, lsd2, phf1 and phf2.

Its subcellular location is the nucleus. Its function is as follows. Component of the SWM histone demethylase complex that specifically demethylates H3K9me2, a specific tag for epigenetic transcriptional activation, thereby acting as a corepressor. Has a role in regulating heterochromatin propagation and euchromatic transcription. This chain is SWM histone demethylase complex subunit phf1 (phf1), found in Schizosaccharomyces pombe (strain 972 / ATCC 24843) (Fission yeast).